The following is a 364-amino-acid chain: Dihydroorotase (364 aa).

Zn(2+) is bound by residues His-14, His-16, Lys-98, His-137, His-180, and Asp-258. An N6-carboxylysine modification is found at Lys-98.

This sequence belongs to the metallo-dependent hydrolases superfamily. DHOase family. Class II DHOase subfamily. Zn(2+) is required as a cofactor.

It catalyses the reaction (S)-dihydroorotate + H2O = N-carbamoyl-L-aspartate + H(+). Its pathway is pyrimidine metabolism; UMP biosynthesis via de novo pathway; (S)-dihydroorotate from bicarbonate: step 3/3. In terms of biological role, catalyzes the conversion of ureidosuccinic acid (USA) to dihydroorotate, the third step of the de novo pyrimidine biosynthetic pathway. The polypeptide is Dihydroorotase (URA4) (Saccharomyces cerevisiae (strain ATCC 204508 / S288c) (Baker's yeast)).